A 720-amino-acid polypeptide reads, in one-letter code: ABC transporter G family member STR2 (720 aa).

Over 1-467 (MRHANGRRGD…NFINIRRTPE (467 aa)) the chain is Cytoplasmic. The ABC transporter domain occupies 25 to 274 (LEFSNLTYTV…LGRMGRKVPK (250 aa)). 70–77 (GPSGAGKS) serves as a coordination point for ATP. Residues 313–346 (GAHEMSIVPPSPAPSHREGRGHDRSNKRLHLKDQ) are disordered. The segment covering 327-346 (SHREGRGHDRSNKRLHLKDQ) has biased composition (basic and acidic residues). Residues 468–488 (LFLSRLVVLTVMGIMMATMFM) form a helical membrane-spanning segment. The Extracellular segment spans residues 489–502 (HPKKNLQGITNRLS). The helical transmembrane segment at 503–523 (FFIFTVCLFFFSSNDAVPAFI) threads the bilayer. Residues 524–547 (QERFIFVRETSHNKYRASSYTIAG) are Cytoplasmic-facing. Residues 548–568 (LITYLPFLAVQAAVYAVIVWF) form a helical membrane-spanning segment. Residues 569 to 575 (ALSLRGP) are Extracellular-facing. Residues 576–596 (FIYFLIVLYMSLLSTNSFVVF) traverse the membrane as a helical segment. At 597–604 (VSSVVPNY) the chain is on the cytoplasmic side. A helical membrane pass occupies residues 605 to 625 (ILGYAAVIAFTALFFLFCGYF). The Extracellular segment spans residues 626-693 (LNSHDMPQYW…QVESKKWEKV (68 aa)). An N-linked (GlcNAc...) asparagine glycan is attached at N681. The helical transmembrane segment at 694 to 714 (YIMLAWAIVYRILFYIVLRFF) threads the bilayer. Residues 715–720 (SKNQRT) lie on the Cytoplasmic side of the membrane.

The protein belongs to the ABC transporter superfamily. ABCG family. Stunted arbuscule (STR) subfamily. As to quaternary structure, heterodimerizes with STR; the resulting transporter is located in the peri-arbuscular membrane.

The protein resides in the cell membrane. Together with STR, required for arbuscule development in arbuscular mycorrhizal (AM) symbiosis. The sequence is that of ABC transporter G family member STR2 from Petunia hybrida (Petunia).